We begin with the raw amino-acid sequence, 448 residues long: T-box transcription factor TBX19 (448 aa).

Positions 45 to 218 (LEDAPLWQRF…YNPFAKAFLD (174 aa)) form a DNA-binding region, T-box.

The protein resides in the nucleus. Its function is as follows. Transcriptional regulator involved in developmental processes. Can activate POMC gene expression and repress the alpha glycoprotein subunit and thyroid-stimulating hormone beta promoters. The polypeptide is T-box transcription factor TBX19 (Homo sapiens (Human)).